Here is a 191-residue protein sequence, read N- to C-terminus: Rho-related GTP-binding protein RhoH (191 aa).

A GTP-binding site is contributed by 11–18 (GDSAVGKT). Residues 33-41 (YKPTVYENT) carry the Effector region motif. 58-62 (DTAGN) is a binding site for GTP. The interaction with ZAP70 stretch occupies residues 73 to 86 (YQQADVVLMCYSVA). 116 to 119 (TQTD) provides a ligand contact to GTP. C188 bears the Cysteine methyl ester mark. C188 is lipidated: S-geranylgeranyl cysteine. The propeptide at 189-191 (KIL) is removed in mature form.

It belongs to the small GTPase superfamily. Rho family. In terms of assembly, interacts with GDI1 and GDI2. Interacts with ZAP70 (via SH2 domains) and the interaction is enhanced by its phosphorylation by LCK. Interacts with SYK and the interaction is enhanced by its phosphorylation by FYN. Post-translationally, phosphorylated on tyrosine by LCK. Phosphorylated by FYN. Phosphorylation enhances the interactions with ZAP70 and SYK and is critical for its function in thymocyte development.

Its subcellular location is the cytoplasm. It localises to the cell membrane. In terms of biological role, binds GTP but lacks intrinsic GTPase activity and is resistant to Rho-specific GTPase-activating proteins. Inhibits the activation of NF-kappa-B by TNF and IKKB and the activation of CRK/p38 by TNF. Inhibits activities of RAC1, RHOA and CDC42. Negatively regulates leukotriene production in neutrophils. Negative regulator of hematopoietic progenitor cell proliferation, survival and migration. Critical regulator of thymocyte development and T-cell antigen receptor (TCR) signaling by mediating recruitment and activation of ZAP70. Required for phosphorylation of CD3Z, membrane translocation of ZAP70 and subsequent activation of the ZAP70-mediated pathways. Essential for efficient beta-selection and positive selection by promoting the ZAP70-dependent phosphorylation of the LAT signalosome during pre-TCR and TCR signaling. Crucial for thymocyte maturation during DN3 to DN4 transition and during positive selection. Plays critical roles in mast cell function by facilitating phosphorylation of SYK in Fc epsilon RI-mediated signal transduction. Essential for the phosphorylation of LAT, LCP2, PLCG1 and PLCG2 and for Ca(2+) mobilization in mast cells. In Bos taurus (Bovine), this protein is Rho-related GTP-binding protein RhoH (RHOH).